The primary structure comprises 143 residues: Hemoglobin subunit alpha-1 (143 aa).

N-acetylserine is present on Ser-2. The 142-residue stretch at Ser-2–Arg-143 folds into the Globin domain. His-60 lines the O2 pocket. His-89 serves as a coordination point for heme b.

Belongs to the globin family. Hb 1 is a heterotetramer of two alpha-1 and two beta-1 chains. Red blood cells.

Involved in oxygen transport from gills to the various peripheral tissues. This is Hemoglobin subunit alpha-1 (hba1) from Boreogadus saida (Polar cod).